The sequence spans 151 residues: Ubiquitin-conjugating enzyme E2 2 (151 aa).

Positions 4–150 (AARRRLMRDF…VRETVEKSWE (147 aa)) constitute a UBC core domain. C88 functions as the Glycyl thioester intermediate in the catalytic mechanism.

The protein belongs to the ubiquitin-conjugating enzyme family.

The protein resides in the cytoplasm. The protein localises to the nucleus. The catalysed reaction is S-ubiquitinyl-[E1 ubiquitin-activating enzyme]-L-cysteine + [E2 ubiquitin-conjugating enzyme]-L-cysteine = [E1 ubiquitin-activating enzyme]-L-cysteine + S-ubiquitinyl-[E2 ubiquitin-conjugating enzyme]-L-cysteine.. Its pathway is protein modification; protein ubiquitination. Catalyzes the covalent attachment of ubiquitin to other proteins. Plays a role in transcription regulation by catalyzing the monoubiquitination of histone H2B to form H2BK123ub1. H2BK123ub1 gives a specific tag for epigenetic transcriptional activation and is also a prerequisite for H3K4me and H3K79me formation. Also involved in postreplication repair of UV-damaged DNA, in N-end rule-dependent protein degradation and in sporulation. The protein is Ubiquitin-conjugating enzyme E2 2 (UBC2) of Fusarium solani (Filamentous fungus).